The following is a 155-amino-acid chain: Deoxyuridine 5'-triphosphate nucleotidohydrolase (155 aa).

Residues 74 to 76 (RSG), asparagine 87, and 91 to 93 (LID) each bind substrate.

The protein belongs to the dUTPase family. Mg(2+) serves as cofactor.

The enzyme catalyses dUTP + H2O = dUMP + diphosphate + H(+). Its pathway is pyrimidine metabolism; dUMP biosynthesis; dUMP from dCTP (dUTP route): step 2/2. In terms of biological role, this enzyme is involved in nucleotide metabolism: it produces dUMP, the immediate precursor of thymidine nucleotides and it decreases the intracellular concentration of dUTP so that uracil cannot be incorporated into DNA. The sequence is that of Deoxyuridine 5'-triphosphate nucleotidohydrolase from Xylella fastidiosa (strain M12).